A 202-amino-acid chain; its full sequence is Endothelin-1 (202 aa).

The first 23 residues, 1-23, serve as a signal peptide directing secretion; sequence MDYFSMMVSLLLVAFHGAPETAA. The segment at 24 to 49 is disordered; sequence SGTELSTGAENPGEKPPASAPWRPRR. The propeptide occupies 24–50; that stretch reads SGTELSTGAENPGEKPPASAPWRPRRS. 2 disulfides stabilise this stretch: cysteine 53–cysteine 67 and cysteine 55–cysteine 63. The propeptide occupies 74 to 202; that stretch reads VNTPGHIVPY…EQKVTHNRTH (129 aa). Positions 110-124 are endothelin-like; sequence CQCTSPHDKKCWNFC.

Belongs to the endothelin/sarafotoxin family.

The protein resides in the secreted. In terms of biological role, endothelins are endothelium-derived vasoconstrictor peptides. Probable ligand for G-protein coupled receptors EDNRA and EDNRB which activates PTK2B, BCAR1, BCAR3 and, GTPases RAP1 and RHOA cascade in glomerular mesangial cells. Also binds the DEAR/FBXW7-AS1 receptor. Promotes mesenteric arterial wall remodeling via activation of ROCK signaling and subsequent colocalization of NFATC3 with F-actin filaments. NFATC3 then translocates to the nucleus where it subsequently promotes the transcription of the smooth muscle hypertrophy and differentiation marker ACTA2. In Oryctolagus cuniculus (Rabbit), this protein is Endothelin-1 (EDN1).